The chain runs to 350 residues: Tsukushi (350 aa).

The first 17 residues, 1–17 (MAPSWLFLLFIPGMVGS), serve as a signal peptide directing secretion. Residues 18–59 (SRSCFPGCQCIVDNFGLFHSFSLTKVDCSGVGPHVVPVSIPL) form the LRRNT domain. LRR repeat units lie at residues 60-81 (DTSY…VLSG), 86-107 (TLIN…TFSK), 110-131 (YLES…SFLY), 133-154 (RLTE…AFTL), 159-180 (RSMT…AERP), 183-203 (NIHS…LHGI), 204-225 (PLRH…SFLG), 228-250 (GLTH…SFKT), 253-275 (SLLD…MFFG), and 278-299 (SLQE…IMLN). 2 N-linked (GlcNAc...) asparagine glycosylation sites follow: asparagine 75 and asparagine 91.

In terms of assembly, interacts with bmp4. Interacts with dll1 (via extracellular region). Interacts with fgf8; inhibits fgf8 signaling. Interacts with nodal2/Xnr2; enhances nodal2 activity.

The protein localises to the secreted. Functionally, contributes to various developmental events through its interactions with multiple signaling pathways. Dorsalizing factor which functions as an inhibitor of bone morphogenetic proteins (BMP) during gastrulation. Promotes dll1-dependent activation of Notch signaling and is required for neural crest formation. Induces endoderm and dorsal mesoderm formation by enhancing nodal2/Xnr2 activity while inhibiting ventrolateral mesoderm formation through inhibition of fgf8. This Xenopus tropicalis (Western clawed frog) protein is Tsukushi (tsku).